A 154-amino-acid chain; its full sequence is Ribonuclease H (154 aa).

The region spanning 1–142 (MTKQVEIFTD…CDELAREGAN (142 aa)) is the RNase H type-1 domain. D10, E48, D70, and D134 together coordinate Mg(2+).

The protein belongs to the RNase H family. Monomer. The cofactor is Mg(2+).

It is found in the cytoplasm. The catalysed reaction is Endonucleolytic cleavage to 5'-phosphomonoester.. Functionally, endonuclease that specifically degrades the RNA of RNA-DNA hybrids. The sequence is that of Ribonuclease H from Yersinia enterocolitica serotype O:8 / biotype 1B (strain NCTC 13174 / 8081).